Consider the following 344-residue polypeptide: Dihydroorotase (344 aa).

Positions 13 and 15 each coordinate Zn(2+). Substrate is bound by residues 15 to 17 (HVR) and Asn-41. Zn(2+) is bound by residues Lys-99, His-136, and His-174. Lys-99 is subject to N6-carboxylysine. His-136 is a substrate binding site. Leu-219 provides a ligand contact to substrate. Asp-247 is a Zn(2+) binding site. The active site involves Asp-247. His-251 and Ala-263 together coordinate substrate.

The protein belongs to the metallo-dependent hydrolases superfamily. DHOase family. Class II DHOase subfamily. In terms of assembly, homodimer. Zn(2+) is required as a cofactor.

The enzyme catalyses (S)-dihydroorotate + H2O = N-carbamoyl-L-aspartate + H(+). It functions in the pathway pyrimidine metabolism; UMP biosynthesis via de novo pathway; (S)-dihydroorotate from bicarbonate: step 3/3. Catalyzes the reversible cyclization of carbamoyl aspartate to dihydroorotate. The protein is Dihydroorotase of Aromatoleum aromaticum (strain DSM 19018 / LMG 30748 / EbN1) (Azoarcus sp. (strain EbN1)).